The sequence spans 406 residues: telomere-associated protein 1 (406 aa).

The segment covering 20–40 (EHHNGSHDNDDKDKEDKEKQN) has biased composition (basic and acidic residues). Residues 20-46 (EHHNGSHDNDDKDKEDKEKQNTEAVAA) form a disordered region. The HTH myb-type domain occupies 147-206 (TTRRVRLRWTQEETADLMEGCKVHGVGNWKKILTDPRFRFNNRTAVDLKDRFRTCFPEDY). A DNA-binding region (H-T-H motif) is located at residues 175–202 (WKKILTDPRFRFNNRTAVDLKDRFRTCF). A Myb-like domain is found at 234–288 (VNRKERRVFTPEEDERLLNGFMKHGPSWSNIQRDNELGLFERRSTDLRDRFRNAF). The tract at residues 368–389 (TQELQPQAHSRKQQGGDGLKEE) is disordered.

The protein resides in the nucleus. It is found in the chromosome. It localises to the telomere. Its function is as follows. Telomere-binding protein that mediates telomere clustering by promoting formation of head-to-head dimers of DNA molecules through the telomeric tracts. Binds specifically 5'-TTAGTCAGGG-3' repeats in subtelomeric regions. The polypeptide is telomere-associated protein 1 (Yarrowia lipolytica (strain CLIB 122 / E 150) (Yeast)).